We begin with the raw amino-acid sequence, 794 residues long: Potassium transporter 2 (794 aa).

Over 1–21 (MDLNLGKCCGSRSSKKESWRS) the chain is Cytoplasmic. Residues 22–42 (VLLLAYQSLGVVYGDLSISPL) traverse the membrane as a helical segment. Residues 43 to 64 (YVFKSTFAEDIQHSETNEEIYG) lie on the Extracellular side of the membrane. Residues 65–85 (VMSFVFWTLTLVPLLKYVFIV) traverse the membrane as a helical segment. The Cytoplasmic portion of the chain corresponds to 86–153 (LRADDNGEGG…EKHKWLHTAL (68 aa)). Residues 154 to 174 (LLLVLLGTCMVIGDGLLTPAI) traverse the membrane as a helical segment. Residues 175–193 (SVFSAVSGLELNMSKEHHQ) are Extracellular-facing. The chain crosses the membrane as a helical span at residues 194-214 (YAVIPITCFILVCLFSLQHFG). At 215–217 (THR) the chain is on the cytoplasmic side. A helical transmembrane segment spans residues 218 to 238 (VGFVFAPIVLTWLLCISGIGL). The Extracellular segment spans residues 239-265 (YNIIQWNPHIYKALSPTYMFMFLRKTR). Residues 266–286 (VSGWMSLGGILLCITGAEAMF) traverse the membrane as a helical segment. At 287–294 (ADLGHFNY) the chain is on the cytoplasmic side. Residues 295–315 (AAIQIAFTFLVYPALILAYMG) form a helical membrane-spanning segment. Residues 316-339 (QAAYLSRHHHSAHAIGFYVSVPKC) lie on the Extracellular side of the membrane. A helical membrane pass occupies residues 340-360 (LHWPVLAVAILASVVGSQAII). At 361 to 391 (SGTFSIINQSQSLGCFPRVKVIHTSDKMHGQ) the chain is on the cytoplasmic side. A helical membrane pass occupies residues 392–412 (IYIPEINWMLMILCIAVTIGF). Residues 413–417 (RDVKH) lie on the Extracellular side of the membrane. The next 2 helical transmembrane spans lie at 418-438 (LGNA…CLTS) and 439-459 (LVIV…LLFF). The Extracellular portion of the chain corresponds to 460–476 (GSIELLYFSASLTKFRE). The helical transmembrane segment at 477–497 (GAWLPILLSLIFMIIMFVWHY) threads the bilayer. Residues 498-794 (TTIKKYEFDL…LLEVGMVYVV (297 aa)) lie on the Cytoplasmic side of the membrane.

Belongs to the HAK/KUP transporter (TC 2.A.72.3) family. Slightly detected in roots, stems, leaves and flowers of mature plants and in potassium-starved plants.

The protein resides in the cell membrane. Low-affinity potassium transporter. Could mediate the potassium-dependent cell expansion in growing tissues. This is Potassium transporter 2 (POT2) from Arabidopsis thaliana (Mouse-ear cress).